Consider the following 433-residue polypeptide: Pyrimidine-nucleoside phosphorylase (433 aa).

A phosphate-binding site is contributed by 81–83; it reads KHS. Positions 88 and 90 each coordinate K(+). Phosphate-binding positions include Thr92, 108 to 110, and Thr120; that span reads KMS. Substrate-binding residues include Arg168 and Lys187. Positions 243, 246, and 255 each coordinate K(+).

Belongs to the thymidine/pyrimidine-nucleoside phosphorylase family. In terms of assembly, homodimer. K(+) is required as a cofactor.

The enzyme catalyses uridine + phosphate = alpha-D-ribose 1-phosphate + uracil. It carries out the reaction thymidine + phosphate = 2-deoxy-alpha-D-ribose 1-phosphate + thymine. It catalyses the reaction 2'-deoxyuridine + phosphate = 2-deoxy-alpha-D-ribose 1-phosphate + uracil. In terms of biological role, catalyzes phosphorolysis of the pyrimidine nucleosides uridine, thymidine and 2'-deoxyuridine with the formation of the corresponding pyrimidine base and ribose-1-phosphate. This Bacillus subtilis (strain 168) protein is Pyrimidine-nucleoside phosphorylase.